The sequence spans 737 residues: Delta and Notch-like epidermal growth factor-related receptor (737 aa).

The first 25 residues, 1-25, serve as a signal peptide directing secretion; it reads MPPRRAQAPGAPLLPVLALLPLLLG. The Extracellular segment spans residues 26 to 640; sequence AGPQSGCLAS…LTNMPRHSLY (615 aa). EGF-like domains are found at residues 44–92 and 94–133; these read APGP…TYCQ and VADPCASNPCHHGNCSSSSSSSSDSYLCICNDGYEGLNCE. Residues 44–133 are interaction with NOTCH1; sequence APGPCASQPC…NDGYEGLNCE (90 aa). Disulfide bonds link Cys-48–Cys-59, Cys-53–Cys-80, Cys-82–Cys-91, Cys-98–Cys-108, Cys-103–Cys-121, and Cys-123–Cys-132. Asn-204 carries N-linked (GlcNAc...) asparagine glycosylation. EGF-like domains lie at 309–348, 349–390, 392–428, 430–466, and 468–503; these read PGDSHSNDLECSGKGKCATKPSEATFSCTCQDQYIGTFCE, EFDA…ELCQ, KIDYCVLDPCRNGATCVSSLSGFTCQCLEGYFGSACE, KVDPCMSSPCQNNGTCYVDGVHFTCSCSPGFTGPTCA, and LVDFCALSPCAHGMCRSVGTSYKCLCDPGYHGLYCE. Intrachain disulfides connect Cys-319/Cys-336, Cys-338/Cys-347, Cys-353/Cys-364, Cys-358/Cys-378, Cys-380/Cys-389, Cys-396/Cys-407, Cys-401/Cys-416, Cys-418/Cys-427, Cys-434/Cys-445, Cys-439/Cys-454, Cys-456/Cys-465, Cys-472/Cys-482, Cys-477/Cys-491, Cys-493/Cys-502, Cys-509/Cys-520, Cys-514/Cys-529, Cys-531/Cys-540, Cys-547/Cys-558, Cys-552/Cys-567, Cys-569/Cys-578, Cys-585/Cys-596, Cys-590/Cys-605, and Cys-607/Cys-616. Residues 505–541 enclose the EGF-like 8; calcium-binding domain; the sequence is EYNECLSAPCLNAATCRDLINGYECVCLAEYKGTHCE. The 37-residue stretch at 543–579 folds into the EGF-like 9 domain; the sequence is YKDPCANISCLNGGTCDSEGLNGTCICAPGFTGEECD. A glycan (N-linked (GlcNAc...) asparagine) is linked at Asn-564. The region spanning 581 to 617 is the EGF-like 10; calcium-binding domain; sequence DINECDSNPCHHAGTCLDQPNGYTCHCPHGWVGANCE. Residues 641–661 traverse the membrane as a helical segment; it reads IIIGALCVAFILMLIILIVGI. The Cytoplasmic segment spans residues 662–737; that stretch reads CRISRIEYQG…LVTLIKTKDL (76 aa). The interaction with AP1G1 and somatodendritic targeting stretch occupies residues 677 to 680; that stretch reads YEEF. Ser-685 carries the phosphoserine modification. Tyr-711 is subject to Phosphotyrosine. Residue Thr-714 is modified to Phosphothreonine. Tyr-721 carries the post-translational modification Phosphotyrosine. Ser-722 bears the Phosphoserine mark.

In terms of assembly, interacts with AP1G1. Interacts with NOTCH1. N-glycosylated. As to expression, specifically expressed in brain neurons (at protein level).

The protein resides in the cell membrane. In terms of biological role, mediates neuron-glia interaction during astrocytogenesis. May promote differentiation of Bergmann glia during cerebellar development by activating DELTEX-dependent NOTCH1 signaling. The polypeptide is Delta and Notch-like epidermal growth factor-related receptor (Dner) (Mus musculus (Mouse)).